A 129-amino-acid chain; its full sequence is NADH-quinone oxidoreductase subunit A (129 aa).

A run of 3 helical transmembrane segments spans residues 14 to 34 (LAIHVALSAGIVAAIIGVAAV), 67 to 87 (FLIAALFVIFDMEAAILFAWA), and 97 to 117 (GLIEAAIFIGVLLLALVYLWI).

The protein belongs to the complex I subunit 3 family. NDH-1 is composed of 14 different subunits. Subunits NuoA, H, J, K, L, M, N constitute the membrane sector of the complex.

The protein localises to the cell inner membrane. It carries out the reaction a quinone + NADH + 5 H(+)(in) = a quinol + NAD(+) + 4 H(+)(out). Functionally, NDH-1 shuttles electrons from NADH, via FMN and iron-sulfur (Fe-S) centers, to quinones in the respiratory chain. The immediate electron acceptor for the enzyme in this species is believed to be ubiquinone. Couples the redox reaction to proton translocation (for every two electrons transferred, four hydrogen ions are translocated across the cytoplasmic membrane), and thus conserves the redox energy in a proton gradient. This chain is NADH-quinone oxidoreductase subunit A, found in Rhodopseudomonas palustris (strain BisB18).